Reading from the N-terminus, the 198-residue chain is GDP-mannose pyrophosphatase (198 aa).

Residues 38 to 40 (KRE), R67, and 85 to 87 (AGL) contribute to the GDP-alpha-D-mannose site. Residues 43–180 (DRGNGATVLL…EIRDGKAVIL (138 aa)) enclose the Nudix hydrolase domain. A85, E100, and E104 together coordinate Mg(2+). Residues 86 to 106 (GLLDNDEPEACIRKEAVEETG) carry the Nudix box motif. GDP-alpha-D-mannose contacts are provided by residues E104, E127, 150–151 (DE), and K176. E151 provides a ligand contact to Mg(2+).

This sequence belongs to the Nudix hydrolase family. NudK subfamily. Homodimer. It depends on Mg(2+) as a cofactor.

It catalyses the reaction GDP-alpha-D-mannose + H2O = alpha-D-mannose 1-phosphate + GMP + 2 H(+). Nucleoside diphosphate sugar hydrolase that hydrolyzes GDP-mannose as its preferred substrate, yielding GMP and mannose-1-phosphate. The protein is GDP-mannose pyrophosphatase (nudK) of Klebsiella pneumoniae subsp. pneumoniae (strain ATCC 700721 / MGH 78578).